A 125-amino-acid chain; its full sequence is Glycine cleavage system H protein (125 aa).

Positions 22 to 104 (VATVGITIHA…EGEGWLFKLK (83 aa)) constitute a Lipoyl-binding domain. K63 carries the N6-lipoyllysine modification.

This sequence belongs to the GcvH family. As to quaternary structure, the glycine cleavage system is composed of four proteins: P, T, L and H. It depends on (R)-lipoate as a cofactor.

Functionally, the glycine cleavage system catalyzes the degradation of glycine. The H protein shuttles the methylamine group of glycine from the P protein to the T protein. The polypeptide is Glycine cleavage system H protein (Brucella abortus (strain 2308)).